The sequence spans 144 residues: Large ribosomal subunit protein uL11 (144 aa).

Belongs to the universal ribosomal protein uL11 family. As to quaternary structure, part of the ribosomal stalk of the 50S ribosomal subunit. Interacts with L10 and the large rRNA to form the base of the stalk. L10 forms an elongated spine to which L12 dimers bind in a sequential fashion forming a multimeric L10(L12)X complex. Post-translationally, one or more lysine residues are methylated.

Its function is as follows. Forms part of the ribosomal stalk which helps the ribosome interact with GTP-bound translation factors. The chain is Large ribosomal subunit protein uL11 from Francisella tularensis subsp. holarctica (strain OSU18).